The primary structure comprises 230 residues: Sugar fermentation stimulation protein homolog (230 aa).

This sequence belongs to the SfsA family.

The protein is Sugar fermentation stimulation protein homolog of Clostridium perfringens (strain 13 / Type A).